The sequence spans 158 residues: Pyruvoyl-dependent arginine decarboxylase (158 aa).

S44 is subject to Pyruvic acid (Ser).

This sequence belongs to the PdaD family. Pyruvate serves as cofactor.

The enzyme catalyses L-arginine + H(+) = agmatine + CO2. In Pyrococcus horikoshii (strain ATCC 700860 / DSM 12428 / JCM 9974 / NBRC 100139 / OT-3), this protein is Pyruvoyl-dependent arginine decarboxylase.